The following is a 526-amino-acid chain: Butyrophilin subfamily 1 member A1 (526 aa).

The signal sequence occupies residues 1–26; sequence MAVFPNSCLAGCLLIFILLQLPKLDS. Ig-like V-type domains lie at 27-140 and 148-234; these read APFD…VHLK and PHIS…VEVS. The Extracellular segment spans residues 27–242; that stretch reads APFDVIGPQE…VSIPASFFPR (216 aa). 2 cysteine pairs are disulfide-bonded: C50-C124 and C164-C218. Residue N55 is glycosylated (N-linked (GlcNAc...) (complex) asparagine). A glycan (N-linked (GlcNAc...) (hybrid) asparagine) is linked at N215. A helical transmembrane segment spans residues 243 to 269; it reads LTPWMVAVAVILVVLGLLTIGSIFFTW. Topologically, residues 270 to 526 are cytoplasmic; it reads RLYKERSRQR…IPLQPSQGVP (257 aa). The B30.2/SPRY domain maps to 285–479; that stretch reads SKEKLLEELK…LTICPVTDGL (195 aa).

The protein belongs to the immunoglobulin superfamily. BTN/MOG family. As to quaternary structure, seems to associate with xanthine dehydrogenase/oxidase. Expressed in mammary tissue.

It is found in the membrane. Its function is as follows. May function in the secretion of milk-fat droplets. May act as a specific membrane-associated receptor for the association of cytoplasmic droplets with the apical plasma membrane. Inhibits the proliferation of CD4 and CD8 T-cells activated by anti-CD3 antibodies, T-cell metabolism and IL2 and IFNG secretion. The protein is Butyrophilin subfamily 1 member A1 (BTN1A1) of Bos taurus (Bovine).